The following is a 398-amino-acid chain: cAMP-dependent protein kinase, catalytic subunit-like (398 aa).

The Protein kinase domain maps to 90–344 (LERIITIGKG…TQDVKDHKWF (255 aa)). ATP-binding positions include 96 to 104 (IGKGTFGRV) and Lys-119. Residue Asp-213 is the Proton acceptor of the active site. Residues 345–398 (EKVNWDDTLHLRVEPPIVPTLYHPGDTGNFDDYEEDTTGGPLCSQRDRDLFAEW) form the AGC-kinase C-terminal domain.

Belongs to the protein kinase superfamily. Ser/Thr protein kinase family. cAMP subfamily.

It catalyses the reaction L-seryl-[protein] + ATP = O-phospho-L-seryl-[protein] + ADP + H(+). The enzyme catalyses L-threonyl-[protein] + ATP = O-phospho-L-threonyl-[protein] + ADP + H(+). This is cAMP-dependent protein kinase, catalytic subunit-like from Caenorhabditis elegans.